A 468-amino-acid polypeptide reads, in one-letter code: Membrane-associated tyrosine- and threonine-specific cdc2-inhibitory kinase wee-1.1 (468 aa).

The span at 25–42 shows a compositional bias: basic and acidic residues; sequence SKDEPNKLNTSRKLEVTT. The segment at 25 to 63 is disordered; the sequence is SKDEPNKLNTSRKLEVTTKKNQSNNKKRPPPINKARKSL. Basic residues predominate over residues 49 to 61; it reads NKKRPPPINKARK. Residues 106-357 form the Protein kinase domain; it reads FNFDKNLGKG…SELMKNHVVK (252 aa). ATP-binding positions include 112–120 and K135; that span reads LGKGSFGEV. Catalysis depends on D224, which acts as the Proton acceptor. Positions 229 and 242 each coordinate Mg(2+). A disordered region spans residues 425–453; it reads EDEYEVFSPPRTPVKKSRYQQTMPEVSPP.

This sequence belongs to the protein kinase superfamily. Ser/Thr protein kinase family. WEE1 subfamily. In terms of tissue distribution, in the 12-13-cell embryo, expressed in the E blastomere. In the 16-cell embryo, expressed in the eight AB cells.

It localises to the nucleus. The catalysed reaction is L-seryl-[protein] + ATP = O-phospho-L-seryl-[protein] + ADP + H(+). It carries out the reaction L-threonyl-[protein] + ATP = O-phospho-L-threonyl-[protein] + ADP + H(+). Its function is as follows. Acts as a negative regulator of entry into mitosis (G2 to M transition) by phosphorylation of the CDK1 kinase. This Caenorhabditis elegans protein is Membrane-associated tyrosine- and threonine-specific cdc2-inhibitory kinase wee-1.1 (wee-1.1).